The primary structure comprises 748 residues: MLWTLPVCLLSLSFSAHIAAVSIQHLSTGHDHDDVDVGEQQKDISEINSAAGLNLFQGDILLPRTRNALRDPSSRWKLPIPYILADNLDLNAKGAILNAFEMFRLKSCVDFKPYEGESSYIIFQQFSGCWSMVGDQHVGQNISIGEGCDYKAIIEHEILHALGFFHEQSRTDRDDYVNIWWNEIMTDYEHNFNTYDDKTITDLNTPYDYESLMHYGPFSFNKNETIPTITTKIPEFNAIIGQRLDFSATDLTRLNRMYNCTRTHTLLDHCAFEKTNICGMIQGTRDDADWVHEDSSQPGQVDHTLVGRCKAAGYFMYFNTSSGVTGEVALLESRILYPKRKQQCLQFFYKMTGSPADRLLIWVRRDDNTGNVCQLAKIQTFQGDSDHNWKIAHVTLNEEKKFRYVFQGTKGDPGNSDGGIYLDDITLTETPCPTGVWTIRNISQVLENTVKGDRLVSPRFYNSEGYGFGVTLYPNGRITSNSGYLGLAFHLYSGDNDVILEWPVENRQAIMTILDQEPDARNRMSLSLMFTTSKYQTSSAINGSVIWDRPTKVGVYDKDCDCFRSIDWGWGQAISHQMLMRRNFLKDDTLIIFVDFKDLTHLRQTEVPIPSRSVIPRGLLLQGQEPLALGDSRIAMMEESLPRRLDQRQPSRPKRSVENTGPMEDHNWPQYFRDPCDPNPCQNEGTCVNVKGMASCRCVSGHAFFYTGERCQAMHVHGSLLGLLIGCITALIFLTFITFSNTYQKLRQ.

An N-terminal signal peptide occupies residues 1 to 20 (MLWTLPVCLLSLSFSAHIAA). The propeptide occupies 21-66 (VSIQHLSTGHDHDDVDVGEQQKDISEINSAAGLNLFQGDILLPRTR). The 195-residue stretch at 67-261 (NALRDPSSRW…TRLNRMYNCT (195 aa)) folds into the Peptidase M12A domain. The Extracellular segment spans residues 67–719 (NALRDPSSRW…RCQAMHVHGS (653 aa)). Intrachain disulfides connect Cys108–Cys260, Cys129–Cys148, and Cys270–Cys432. A glycan (N-linked (GlcNAc...) asparagine) is linked at Asn141. His156 lines the Zn(2+) pocket. Glu157 is a catalytic residue. The Zn(2+) site is built by His160 and His166. Asn223, Asn259, Asn319, Asn441, and Asn542 each carry an N-linked (GlcNAc...) asparagine glycan. The 170-residue stretch at 265–434 (TLLDHCAFEK…ITLTETPCPT (170 aa)) folds into the MAM domain. An MATH domain is found at 435-596 (GVWTIRNISQ…DDTLIIFVDF (162 aa)). The disordered stretch occupies residues 641–668 (LPRRLDQRQPSRPKRSVENTGPMEDHNW). The 41-residue stretch at 672 to 712 (FRDPCDPNPCQNEGTCVNVKGMASCRCVSGHAFFYTGERCQ) folds into the EGF-like domain. 3 disulfide bridges follow: Cys676-Cys687, Cys681-Cys696, and Cys698-Cys711. The helical transmembrane segment at 720–739 (LLGLLIGCITALIFLTFITF) threads the bilayer. Residues 740–748 (SNTYQKLRQ) are Cytoplasmic-facing.

As to quaternary structure, homotetramer consisting of disulfide-linked alpha subunits, homooligomer consisting of disulfide-linked alpha subunit homodimers, or heterotetramer of two alpha and two beta subunits formed by non-covalent association of two disulfide-linked heterodimers. Interacts with MBL2 through its carbohydrate moiety. This interaction may inhibit its catalytic activity. Zn(2+) serves as cofactor. Post-translationally, N-glycosylated; contains GlcNAc, galactose, mannose and a small amount of fucose. In terms of tissue distribution, colocalized with E-24.11 in proximal tubules of juxtamedullary nephrons.

The protein localises to the membrane. It catalyses the reaction Hydrolysis of protein and peptide substrates preferentially on carboxyl side of hydrophobic residues.. With respect to regulation, inhibited by actinonin. This chain is Meprin A subunit alpha (Mep1a), found in Rattus norvegicus (Rat).